The following is a 363-amino-acid chain: MEKQIAVLPGDGIGPEVTDAAIEVLQAVADRFGHTFSYKKALLGGCAIDEVGTPLPEETLDVCRHADGILLGAVGGPKWDTLPGHLRPEKGLLGLRKGLNLFANLRPVTVYDSLADASTLKNDVIDGVDLLIVRELTGGLYFGEPRERRGEGETEEVVDTLLYTRGEMRRIIRKAFELAMVRNKHVTSVDKANVLESSRMWREVANEVAQEFPEVTLEHMLVDNAAMQLIRRPKQFDVLVTENLFGDILSDEASMVTGSLGMLPSASLTSDGPGLYEPIHGSAPDIAGKGVANPLATIASCAMMLKYSFGLHEEAKTIEDAIEAVLKQGYRTADIAKPGEESSSTKAITDAVVEAIQASVDIS.

76–89 lines the NAD(+) pocket; the sequence is GPKWDTLPGHLRPE. Residues Arg-96, Arg-106, Arg-134, and Asp-223 each coordinate substrate. Positions 223, 247, and 251 each coordinate Mg(2+). An NAD(+)-binding site is contributed by 281–293; it reads GSAPDIAGKGVAN.

This sequence belongs to the isocitrate and isopropylmalate dehydrogenases family. LeuB type 1 subfamily. In terms of assembly, homodimer. The cofactor is Mg(2+). Mn(2+) is required as a cofactor.

Its subcellular location is the cytoplasm. The catalysed reaction is (2R,3S)-3-isopropylmalate + NAD(+) = 4-methyl-2-oxopentanoate + CO2 + NADH. The protein operates within amino-acid biosynthesis; L-leucine biosynthesis; L-leucine from 3-methyl-2-oxobutanoate: step 3/4. Functionally, catalyzes the oxidation of 3-carboxy-2-hydroxy-4-methylpentanoate (3-isopropylmalate) to 3-carboxy-4-methyl-2-oxopentanoate. The product decarboxylates to 4-methyl-2 oxopentanoate. The protein is 3-isopropylmalate dehydrogenase of Halalkalibacterium halodurans (strain ATCC BAA-125 / DSM 18197 / FERM 7344 / JCM 9153 / C-125) (Bacillus halodurans).